Reading from the N-terminus, the 483-residue chain is Cobyric acid synthase (483 aa).

The GATase cobBQ-type domain maps to 251–438; it reads ALIVAVPMLP…LHGVFSADRF (188 aa). Residue C333 is the Nucleophile of the active site. Residue H430 is part of the active site.

The protein belongs to the CobB/CobQ family. CobQ subfamily.

The protein operates within cofactor biosynthesis; adenosylcobalamin biosynthesis. Functionally, catalyzes amidations at positions B, D, E, and G on adenosylcobyrinic A,C-diamide. NH(2) groups are provided by glutamine, and one molecule of ATP is hydrogenolyzed for each amidation. The chain is Cobyric acid synthase from Brucella suis biovar 1 (strain 1330).